A 208-amino-acid chain; its full sequence is Small ribosomal subunit protein uS4 (208 aa).

Residues 98-158 (RRLDNVVYRL…EKSRKIACIN (61 aa)) form the S4 RNA-binding domain.

Belongs to the universal ribosomal protein uS4 family. Part of the 30S ribosomal subunit. Contacts protein S5. The interaction surface between S4 and S5 is involved in control of translational fidelity.

Functionally, one of the primary rRNA binding proteins, it binds directly to 16S rRNA where it nucleates assembly of the body of the 30S subunit. Its function is as follows. With S5 and S12 plays an important role in translational accuracy. The chain is Small ribosomal subunit protein uS4 from Geobacter sulfurreducens (strain ATCC 51573 / DSM 12127 / PCA).